Reading from the N-terminus, the 426-residue chain is Dihydroorotase (426 aa).

The Zn(2+) site is built by His-58 and His-60. Substrate-binding positions include 60-62 (HLR) and Asn-92. Zn(2+) is bound by residues Asp-150, His-177, and His-230. A substrate-binding site is contributed by Asn-276. Asp-303 provides a ligand contact to Zn(2+). Residue Asp-303 is part of the active site. Residue His-307 coordinates substrate.

It belongs to the metallo-dependent hydrolases superfamily. DHOase family. Class I DHOase subfamily. Zn(2+) serves as cofactor.

The enzyme catalyses (S)-dihydroorotate + H2O = N-carbamoyl-L-aspartate + H(+). It functions in the pathway pyrimidine metabolism; UMP biosynthesis via de novo pathway; (S)-dihydroorotate from bicarbonate: step 3/3. Functionally, catalyzes the reversible cyclization of carbamoyl aspartate to dihydroorotate. The sequence is that of Dihydroorotase from Acetivibrio thermocellus (strain ATCC 27405 / DSM 1237 / JCM 9322 / NBRC 103400 / NCIMB 10682 / NRRL B-4536 / VPI 7372) (Clostridium thermocellum).